The chain runs to 23 residues: VAIIIYSMYGHIAKYGNFPGQWK.

The chain is Unknown protein 1 from Coniferiporia sulphurascens (Laminated root rot fungus).